The primary structure comprises 331 residues: Fructose-1,6-bisphosphatase class 1 (331 aa).

Residues Glu-88, Asp-108, Leu-110, and Asp-111 each coordinate Mg(2+). Residues 111–114 (DGSS) and Asn-201 contribute to the substrate site. Glu-273 is a binding site for Mg(2+).

This sequence belongs to the FBPase class 1 family. Homotetramer. Mg(2+) serves as cofactor.

It is found in the cytoplasm. It catalyses the reaction beta-D-fructose 1,6-bisphosphate + H2O = beta-D-fructose 6-phosphate + phosphate. It participates in carbohydrate biosynthesis; gluconeogenesis. This is Fructose-1,6-bisphosphatase class 1 from Methylobacillus flagellatus (strain ATCC 51484 / DSM 6875 / VKM B-1610 / KT).